The sequence spans 569 residues: Oxygen-dependent choline dehydrogenase (569 aa).

9 to 38 contributes to the FAD binding site; that stretch reads DYVIIGGGSAGSVLGNRLSEDKDKEVLVLE. Histidine 475 acts as the Proton acceptor in catalysis.

Belongs to the GMC oxidoreductase family. It depends on FAD as a cofactor.

It catalyses the reaction choline + A = betaine aldehyde + AH2. The catalysed reaction is betaine aldehyde + NAD(+) + H2O = glycine betaine + NADH + 2 H(+). It functions in the pathway amine and polyamine biosynthesis; betaine biosynthesis via choline pathway; betaine aldehyde from choline (cytochrome c reductase route): step 1/1. Involved in the biosynthesis of the osmoprotectant glycine betaine. Catalyzes the oxidation of choline to betaine aldehyde and betaine aldehyde to glycine betaine at the same rate. This chain is Oxygen-dependent choline dehydrogenase, found in Staphylococcus aureus (strain MSSA476).